The sequence spans 315 residues: Taste receptor type 2 member 3 (315 aa).

The Extracellular segment spans residues 1–5 (MGLTE). Residues 6 to 26 (GVFLILSGTQFTLGILVNCFI) traverse the membrane as a helical segment. The Cytoplasmic portion of the chain corresponds to 27–41 (ELVNGSSWFKTKRMS). Residues 42–62 (LSDFIITTLALLRIILLCIIL) traverse the membrane as a helical segment. Over 63-93 (TDSFLIEFSPNTHDSGIIMQIIDVSWTFTNH) the chain is Extracellular. A helical transmembrane segment spans residues 94–114 (LSIWLATCLGVLYCLKIASFS). Topologically, residues 115–127 (HPTFLWLKWRVSR) are cytoplasmic. The chain crosses the membrane as a helical span at residues 128–148 (VMVWMLLGALLLSCGSTASLI). Residues 149–185 (NEFKLYSVFRGIEATRNVTEHFRKKRSEYYLIHVLGT) lie on the Extracellular side of the membrane. N-linked (GlcNAc...) asparagine glycosylation is present at N165. The chain crosses the membrane as a helical span at residues 186–206 (LWYLPPLIVSLASYSLLIFSL). At 207–233 (GRHTRQMLQNGTSSRDPTTEAHKRAIR) the chain is on the cytoplasmic side. A helical membrane pass occupies residues 234-254 (IILSFFFLFLLYFLAFLIASF). Topologically, residues 255–265 (GNFLPKTKMAK) are extracellular. A helical transmembrane segment spans residues 266-286 (MIGEVMTMFYPAGHSFILILG). The Cytoplasmic segment spans residues 287–315 (NSKLKQTFVVMLRCESGHLKPGSKGPIFS).

It belongs to the G-protein coupled receptor T2R family.

It localises to the membrane. In terms of biological role, gustducin-coupled receptor implicated in the perception of bitter compounds in the oral cavity and the gastrointestinal tract. Signals through PLCB2 and the calcium-regulated cation channel TRPM5. This chain is Taste receptor type 2 member 3 (TAS2R3), found in Gorilla gorilla gorilla (Western lowland gorilla).